The primary structure comprises 63 residues: Large ribosomal subunit protein bL32 (63 aa).

2 disordered regions span residues 1–25 (MAVP…LTTP) and 42–63 (VSPK…QNND). The span at 7–20 (KTSKQKKRSRRGHI) shows a compositional bias: basic residues. Over residues 54–63 (ANENKQQNND) the composition is skewed to polar residues.

This sequence belongs to the bacterial ribosomal protein bL32 family.

The sequence is that of Large ribosomal subunit protein bL32 from Lactobacillus johnsonii (strain CNCM I-12250 / La1 / NCC 533).